Here is a 395-residue protein sequence, read N- to C-terminus: Elongation factor Tu (395 aa).

The tr-type G domain occupies 10-204 (KPHVNIGTIG…AVDEYIPTPQ (195 aa)). The segment at 19–26 (GHVDHGKT) is G1. 19–26 (GHVDHGKT) lines the GTP pocket. Thr-26 serves as a coordination point for Mg(2+). The G2 stretch occupies residues 60–64 (GITIS). The interval 81–84 (DCPG) is G3. GTP is bound by residues 81–85 (DCPGH) and 136–139 (NKCD). A G4 region spans residues 136–139 (NKCD). Residues 174–176 (SAL) are G5.

The protein belongs to the TRAFAC class translation factor GTPase superfamily. Classic translation factor GTPase family. EF-Tu/EF-1A subfamily. As to quaternary structure, monomer.

It is found in the cytoplasm. It catalyses the reaction GTP + H2O = GDP + phosphate + H(+). In terms of biological role, GTP hydrolase that promotes the GTP-dependent binding of aminoacyl-tRNA to the A-site of ribosomes during protein biosynthesis. The protein is Elongation factor Tu of Geobacillus sp. (strain WCH70).